A 340-amino-acid chain; its full sequence is tRNA N6-adenosine threonylcarbamoyltransferase (340 aa).

The Fe cation site is built by His-111 and His-115. Substrate is bound by residues 134-138 (LVSGG), Asp-167, Gly-180, and Asn-276. A Fe cation-binding site is contributed by Asp-304.

It belongs to the KAE1 / TsaD family. Fe(2+) serves as cofactor.

The protein resides in the cytoplasm. The catalysed reaction is L-threonylcarbamoyladenylate + adenosine(37) in tRNA = N(6)-L-threonylcarbamoyladenosine(37) in tRNA + AMP + H(+). In terms of biological role, required for the formation of a threonylcarbamoyl group on adenosine at position 37 (t(6)A37) in tRNAs that read codons beginning with adenine. Is involved in the transfer of the threonylcarbamoyl moiety of threonylcarbamoyl-AMP (TC-AMP) to the N6 group of A37, together with TsaE and TsaB. TsaD likely plays a direct catalytic role in this reaction. In Helicobacter pylori (strain G27), this protein is tRNA N6-adenosine threonylcarbamoyltransferase.